The primary structure comprises 80 residues: MKLTRVLIIAVLFLTAYQLTTVETYSRGKWMHRALRSTGKNPKVTRECSSPDESCTYHYNCCQLYCNKEENVCLENSPEV.

An N-terminal signal peptide occupies residues 1-24 (MKLTRVLIIAVLFLTAYQLTTVET). Residues 25–47 (YSRGKWMHRALRSTGKNPKVTRE) constitute a propeptide that is removed on maturation. 3 disulfides stabilise this stretch: Cys48/Cys62, Cys55/Cys66, and Cys61/Cys73.

This sequence belongs to the conotoxin O1 superfamily. In terms of tissue distribution, expressed by the venom duct.

The protein resides in the secreted. This is Conotoxin Lt6.2 from Conus litteratus (Lettered cone).